The sequence spans 396 residues: Argininosuccinate synthase (396 aa).

A9–T17 is a binding site for ATP. Y86 lines the L-citrulline pocket. G116 is an ATP binding site. L-aspartate is bound by residues T118, N122, and D123. N122 serves as a coordination point for L-citrulline. Positions 126, 172, 181, 254, and 266 each coordinate L-citrulline.

Belongs to the argininosuccinate synthase family. Type 1 subfamily. Homotetramer.

The protein localises to the cytoplasm. The catalysed reaction is L-citrulline + L-aspartate + ATP = 2-(N(omega)-L-arginino)succinate + AMP + diphosphate + H(+). It participates in amino-acid biosynthesis; L-arginine biosynthesis; L-arginine from L-ornithine and carbamoyl phosphate: step 2/3. In Halobacterium salinarum (strain ATCC 700922 / JCM 11081 / NRC-1) (Halobacterium halobium), this protein is Argininosuccinate synthase.